The chain runs to 303 residues: Recombination-associated protein RdgC (303 aa).

It belongs to the RdgC family.

The protein resides in the cytoplasm. It is found in the nucleoid. Its function is as follows. May be involved in recombination. The protein is Recombination-associated protein RdgC of Shewanella halifaxensis (strain HAW-EB4).